The following is a 189-amino-acid chain: HGPRTase-like protein 2 (189 aa).

The protein belongs to the purine/pyrimidine phosphoribosyltransferase family. Archaeal HPRT subfamily.

Functionally, may catalyze a purine salvage reaction, the substrate is unknown. In Haloarcula marismortui (strain ATCC 43049 / DSM 3752 / JCM 8966 / VKM B-1809) (Halobacterium marismortui), this protein is HGPRTase-like protein 2.